The sequence spans 779 residues: Lon protease (779 aa).

In terms of domain architecture, Lon N-terminal spans 7–190 (VPVLFLNDSI…LLIGWTGDHL (184 aa)). Residue 352 to 359 (GPPGVGKT) coordinates ATP. The region spanning 589 to 769 (TAVPGVATGL…ADIIAAALEP (181 aa)) is the Lon proteolytic domain. Active-site residues include serine 675 and lysine 718.

It belongs to the peptidase S16 family. In terms of assembly, homohexamer. Organized in a ring with a central cavity. Oligomerization is Mg(2+)-dependent.

Its subcellular location is the cytoplasm. It catalyses the reaction Hydrolysis of proteins in presence of ATP.. With respect to regulation, stimulated by unfolded protein. Its function is as follows. ATP-dependent serine protease that mediates the selective degradation of mutant and abnormal proteins as well as certain short-lived regulatory proteins. Required for cellular homeostasis and for survival from DNA damage and developmental changes induced by stress. Degrades polypeptides processively to yield small peptide fragments that are 5 to 10 amino acids long. Binds to DNA in a double-stranded, site-specific manner. This Mycolicibacterium smegmatis (Mycobacterium smegmatis) protein is Lon protease.